We begin with the raw amino-acid sequence, 735 residues long: Muskelin (735 aa).

Residue Ala-2 is modified to N-acetylalanine. The LisH domain occupies 172-204 (REQEAIRLCLKHFRQHNYTEAFESLQKKTKIAL). One can recognise a CTLH domain in the interval 206–258 (HPMLTDMHDKLVLKGDFDACEELIEKAVNDGLFNQYISQQEYKPRWSQIIPKS). Kelch repeat units follow at residues 284–330 (TVYL…SCHK), 339–391 (QIYT…FDHQ), 400–458 (MIYT…SRIG), 469–515 (CLYV…TGFT), 526–578 (EIHV…SLQE), and 597–651 (VHYL…AQMD). An important for location in the cytosol region spans residues 701–735 (DHTYAQRTQLFDTLVNFFPDSMTPPKGNLVDLITL).

As to quaternary structure, homodimer; may form higher oligomers. Identified in the CTLH complex that contains GID4, RANBP9 and/or RANBP10, MKLN1, MAEA, RMND5A (or alternatively its paralog RMND5B), GID8, ARMC8, WDR26 and YPEL5. Within this complex, MAEA, RMND5A (or alternatively its paralog RMND5B), GID8, WDR26, and RANBP9 and/or RANBP10 form the catalytic core, while GID4, MKLN1, ARMC8 and YPEL5 have ancillary roles. Interacts with RANBP9. Part of a complex consisting of RANBP9, MKLN1 and GID8. Interacts with GABRA1. Interacts with the C-terminal tail of PTGER3. As to expression, detected in brain, especially in hippocampus and cerebellum (at protein level).

It localises to the cytoplasm. The protein localises to the cytosol. Its subcellular location is the nucleus. The protein resides in the nucleoplasm. It is found in the cell projection. It localises to the ruffle. The protein localises to the cell cortex. Its subcellular location is the synapse. The protein resides in the postsynapse. In terms of biological role, component of the CTLH E3 ubiquitin-protein ligase complex that selectively accepts ubiquitin from UBE2H and mediates ubiquitination and subsequent proteasomal degradation of the transcription factor HBP1. Required for internalization of the GABA receptor GABRA1 from the cell membrane via endosomes and subsequent GABRA1 degradation. Acts as a mediator of cell spreading and cytoskeletal responses to the extracellular matrix component THBS1. This Mus musculus (Mouse) protein is Muskelin (Mkln1).